We begin with the raw amino-acid sequence, 77 residues long: Small ribosomal subunit protein bS21 (77 aa).

Residues 55–77 (RKLARKRAQREGLMSNGRISALR) form a disordered region.

This sequence belongs to the bacterial ribosomal protein bS21 family.

This is Small ribosomal subunit protein bS21 from Bartonella quintana (strain Toulouse) (Rochalimaea quintana).